The chain runs to 265 residues: Thiazole synthase (265 aa).

The active-site Schiff-base intermediate with DXP is Lys-107. 1-deoxy-D-xylulose 5-phosphate is bound by residues Gly-168, 194-195, and 216-217; these read AG and NT.

This sequence belongs to the ThiG family. In terms of assembly, homotetramer. Forms heterodimers with either ThiH or ThiS.

Its subcellular location is the cytoplasm. It catalyses the reaction [ThiS sulfur-carrier protein]-C-terminal-Gly-aminoethanethioate + 2-iminoacetate + 1-deoxy-D-xylulose 5-phosphate = [ThiS sulfur-carrier protein]-C-terminal Gly-Gly + 2-[(2R,5Z)-2-carboxy-4-methylthiazol-5(2H)-ylidene]ethyl phosphate + 2 H2O + H(+). The protein operates within cofactor biosynthesis; thiamine diphosphate biosynthesis. Functionally, catalyzes the rearrangement of 1-deoxy-D-xylulose 5-phosphate (DXP) to produce the thiazole phosphate moiety of thiamine. Sulfur is provided by the thiocarboxylate moiety of the carrier protein ThiS. In vitro, sulfur can be provided by H(2)S. In Pseudomonas aeruginosa (strain LESB58), this protein is Thiazole synthase.